The chain runs to 101 residues: Putative defensin-like protein 307 (101 aa).

The signal sequence occupies residues 1–22; sequence MEKSALIFIGILLFSTCTSIMA. Intrachain disulfides connect Cys29–Cys49, Cys35–Cys54, and Cys40–Cys56.

Belongs to the DEFL family.

It localises to the secreted. In Arabidopsis thaliana (Mouse-ear cress), this protein is Putative defensin-like protein 307.